A 294-amino-acid chain; its full sequence is Glycine--tRNA ligase alpha subunit (294 aa).

This sequence belongs to the class-II aminoacyl-tRNA synthetase family. Tetramer of two alpha and two beta subunits.

Its subcellular location is the cytoplasm. The catalysed reaction is tRNA(Gly) + glycine + ATP = glycyl-tRNA(Gly) + AMP + diphosphate. The polypeptide is Glycine--tRNA ligase alpha subunit (Sulfurovum sp. (strain NBC37-1)).